Reading from the N-terminus, the 915-residue chain is Phototropin-2 (915 aa).

Residues 1 to 10 (MERPRAPPSP) are compositionally biased toward pro residues. Disordered regions lie at residues 1-62 (MERP…EFQD) and 84-118 (DDGISFKLSSEVERSKNMSRRSSEESTSSESGAFP). Phosphoserine is present on residues Ser9 and Ser22. The span at 27–43 (NPSSGKETHGSTSSSSK) shows a compositional bias: polar residues. Positions 93–107 (SEVERSKNMSRRSSE) are enriched in basic and acidic residues. Residues 120-193 (VSQELKTALS…AKIRDCVKNG (74 aa)) enclose the PAS 1 domain. At Ser121 the chain carries Phosphoserine. An FMN-binding site is contributed by Asn169. Cys170 is subject to S-4a-FMN cysteine. 7 residues coordinate FMN: Arg171, Gln174, Arg187, Asn202, Asn212, Gln233, and Lys238. One can recognise a PAC 1 domain in the interval 194–248 (KSYCGRLLNYKKDGTPFWNLLTVTPIKDDQGNTIKFIGMQVEVSKYTEGVNDKAL). Residues 281 to 344 (HRKSQVQESV…KSSNNRHEDL (64 aa)) form a disordered region. 2 stretches are compositionally biased toward polar residues: residues 286 to 310 (VQESVSNDTMVKPDSSTTPTPGRQT) and 325 to 337 (RVSTPTGSKLKSS). The residue at position 364 (Ser364) is a Phosphoserine. One can recognise a PAS 2 domain in the interval 376-449 (QGIDLATTLE…QKIRDAIRDQ (74 aa)). Asn425 is an FMN binding site. Cys426 carries the S-4a-FMN cysteine modification. Positions 427, 430, 443, 458, 468, 470, and 489 each coordinate FMN. In terms of domain architecture, PAC 2 spans 450–504 (REITVQLINYTKSGKKFWNLFHLQPMRDQKGELQYFIGVQLDGSDHVEPLQNRLS). Residues 577 to 864 (FKPIKPLGSG…ANEIKQHAFF (288 aa)) enclose the Protein kinase domain. ATP-binding positions include 583–591 (LGSGDTGSV) and Lys606. Asp702 (proton acceptor) is an active-site residue. The activation loop stretch occupies residues 720–774 (DFDLSFMTTCTPQLIIPAAPSKRRRSKSQPLPTFVAEPSTQSNSFVGTEEYIAPE).

Belongs to the protein kinase superfamily. AGC Ser/Thr protein kinase family. As to quaternary structure, homodimer. Interacts with PKS1, PKS2, RPT3 and PHOT1. Associates with CBC1 and CBC2. Binds to BHP. It depends on FMN as a cofactor. Post-translationally, autophosphorylated in response to blue light irradiation. In terms of processing, 2 molecules of FMN bind covalently to cysteines after exposure to blue light and are reversed in the dark. Expressed in leaves, stems and flowers, and to a lower extent in roots. Present in guard cells (at protein level).

It localises to the cell membrane. It carries out the reaction L-seryl-[protein] + ATP = O-phospho-L-seryl-[protein] + ADP + H(+). It catalyses the reaction L-threonyl-[protein] + ATP = O-phospho-L-threonyl-[protein] + ADP + H(+). With respect to regulation, autophosphorylation is inhibited by staurosporine, but not by tyrphostin 9, sphingosine, GW5074 and BML-265. In terms of biological role, protein kinase that acts as a blue light photoreceptor in a signal-transduction pathway for photo-induced movements. Triggers the phosphorylation of AHA1 and AHA2 C-terminal penultimate Thr in guard cells to activate them and induce stomatal opening in response to blue light (BL). Also phosphorylates BLUS1, a kinase involved in stomatal opening. Mediates calcium spiking of extra- and intracellular origins in response to blue light. Involved in hypocotyl phototropism. Contributes to the chloroplast accumulation in low blue light and mediates their translocation (avoidance response) at high fluence. Regulates stomata opening and photomorphogenesis response of leaf tissue. Not involved in hypocotyl elongation inhibition, anthocyanin accumulation or cotyledon opening. This chain is Phototropin-2, found in Arabidopsis thaliana (Mouse-ear cress).